We begin with the raw amino-acid sequence, 73 residues long: Disintegrin cerastin (73 aa).

The region spanning 1 to 73 is the Disintegrin domain; the sequence is EAGEECDCGT…ADCPRNGLYG (73 aa). Intrachain disulfides connect Cys-6–Cys-21, Cys-8–Cys-16, Cys-15–Cys-38, Cys-29–Cys-35, Cys-34–Cys-59, and Cys-47–Cys-66. The short motif at 51–53 is the Cell attachment site element; that stretch reads RGD.

The protein belongs to the venom metalloproteinase (M12B) family. P-II subfamily. P-IIa sub-subfamily. As to quaternary structure, monomer (disintegrin). As to expression, expressed by the venom gland.

The protein resides in the secreted. Its function is as follows. Inhibits fibrinogen interaction with platelets. Acts by binding to alpha-IIb/beta-3 (ITGA2B/ITGB3) on the platelet surface and inhibits aggregation induced by ADP, thrombin, platelet-activating factor and collagen. This chain is Disintegrin cerastin, found in Crotalus cerastes cerastes (Mojave desert sidewinder).